Consider the following 278-residue polypeptide: Thiazole synthase (278 aa).

Lys-109 (schiff-base intermediate with DXP) is an active-site residue. 1-deoxy-D-xylulose 5-phosphate contacts are provided by residues Gly-170, 197–198, and 219–220; these read AG and NT.

The protein belongs to the ThiG family. Homotetramer. Forms heterodimers with either ThiH or ThiS.

It localises to the cytoplasm. The enzyme catalyses [ThiS sulfur-carrier protein]-C-terminal-Gly-aminoethanethioate + 2-iminoacetate + 1-deoxy-D-xylulose 5-phosphate = [ThiS sulfur-carrier protein]-C-terminal Gly-Gly + 2-[(2R,5Z)-2-carboxy-4-methylthiazol-5(2H)-ylidene]ethyl phosphate + 2 H2O + H(+). It functions in the pathway cofactor biosynthesis; thiamine diphosphate biosynthesis. Functionally, catalyzes the rearrangement of 1-deoxy-D-xylulose 5-phosphate (DXP) to produce the thiazole phosphate moiety of thiamine. Sulfur is provided by the thiocarboxylate moiety of the carrier protein ThiS. In vitro, sulfur can be provided by H(2)S. The polypeptide is Thiazole synthase (Cupriavidus taiwanensis (strain DSM 17343 / BCRC 17206 / CCUG 44338 / CIP 107171 / LMG 19424 / R1) (Ralstonia taiwanensis (strain LMG 19424))).